Reading from the N-terminus, the 361-residue chain is Methyltransferase LUC1 (361 aa).

5 residues coordinate S-adenosyl-L-homocysteine: Y18, N66, D89, S126, and F127. Residues Q156 and F233 each contribute to the Mg(2+) site.

This sequence belongs to the methyltransferase superfamily. Type-7 methyltransferase family. Mg(2+) is required as a cofactor.

It functions in the pathway mycotoxin biosynthesis. Methyltransferase; part of the gene cluster that mediates the biosynthesis of the mycotoxin lucilactaene and the lucilactaene-related compound NG-391 that act as cell cycle inhibitors with potent growth inhibitory activity against malarial parasites, moderate growth inhibitory activity against cancer cells, and no activity against bacteria and fungi. LUC1 performs the last step of the pathway and methylates the hydroxyl group of demethyllucilactaene at C-21 to yeald lucilactaene. The pathway begins with the hybrid PKS-NRPS synthetase LUC5 which is responsible for the condensation of one acetyl-coenzyme A (CoA) unit with six malonyl-CoA units and the amide linkage of the arising heptaketide and homoserine, subsequently releasing the first intermediate prelucilactaene B. Both the cytochrome P450 monooxygenase LUC2 and the hydrolase LUC6 function in parallel in modification of prelucilactaene B. LUC6 may catalyze the 2-pyrrolidone ring formation to form prelucilactaene C from prelucilactaene B, followed by C-15 hydroxylation by the same enzyme to give prelucilactaene D, which is then converted to prelucilactaene E by epoxidation, and finally to prelucilactaene F by cyclization. Prelucilactane D, prelucilactaene E, and prelucilactaene F can be converted to dihydrolucilactaene, NG391, and lucilactaene, respectively, via C-20 methyl group hydroxylation by the cytochrome P450 monooxygenase LUC2. However, LUC2, unlike FUS8 in fusarin C biosynthesis, is not enough for the full oxidation of the C-20 methyl group into carboxylic acid, which is a prerequisite for the final methylation step. The aldehyde dehydrogenase LUC3 is involved in the biosynthesis by further oxidation of the C-20 alcoholic analog prelucilactaene G into a carboxylic derivative. This unidentified carboxylic derivative may be converted to demethyllucilactaene. As the last step, the methyltransferase LUC1 methylates the hydroxyl group at C-21 of demethyllucilactaene to generate lucilactaene. This chain is Methyltransferase LUC1, found in Fusarium sp.